The chain runs to 981 residues: Rab3 GTPase-activating protein catalytic subunit (981 aa).

Phosphoserine is present on residues Ser-83, Ser-379, Ser-537, Ser-579, Ser-581, and Ser-590. Residues 592-613 (TEELKGNGQESGKKGGPKEMAN) are disordered. At Ser-664 the chain carries Phosphoserine. Position 908 is a phosphothreonine (Thr-908). The interval 908–937 (TPPEEELKRMGSPEERRQNSVSDFPPPAGR) is disordered. The span at 912-925 (EELKRMGSPEERRQ) shows a compositional bias: basic and acidic residues.

It belongs to the Rab3-GAP catalytic subunit family. As to quaternary structure, the Rab3 GTPase-activating complex is a heterodimer composed of RAB3GAP1 and RAB3GAP2. The Rab3 GTPase-activating complex interacts with DMXL2. Interacts with LMAN1. As to expression, ubiquitous.

It is found in the cytoplasm. The protein resides in the endoplasmic reticulum. It localises to the golgi apparatus. Its subcellular location is the cis-Golgi network. Its function is as follows. Catalytic subunit of the Rab3 GTPase-activating (Rab3GAP) complex composed of RAB3GAP1 and RAB3GAP2, which has GTPase-activating protein (GAP) activity towards various Rab3 subfamily members (RAB3A, RAB3B, RAB3C and RAB3D), RAB5A and RAB43, and guanine nucleotide exchange factor (GEF) activity towards RAB18. As part of the Rab3GAP complex, acts as a GAP for Rab3 proteins by converting active RAB3-GTP to the inactive form RAB3-GDP. Rab3 proteins are involved in regulated exocytosis of neurotransmitters and hormones. The Rab3GAP complex, acts as a GEF for RAB18 by promoting the conversion of inactive RAB18-GDP to the active form RAB18-GTP. Recruits and stabilizes RAB18 at the cis-Golgi membrane in fibroblasts where RAB18 is most likely activated. Also involved in RAB18 recruitment at the endoplasmic reticulum (ER) membrane where it maintains proper ER structure. Required for normal eye and brain development. May participate in neurodevelopmental processes such as proliferation, migration and differentiation before synapse formation, and non-synaptic vesicular release of neurotransmitters. In Homo sapiens (Human), this protein is Rab3 GTPase-activating protein catalytic subunit.